We begin with the raw amino-acid sequence, 531 residues long: MLPITDRLLHLLGLEKTAFRIYAVSTLLLFLLFFLFRLLLRFLRLCRSFYITCRRLRCFPQPPRRNWLLGHLGMYLPNEAGLQDEKKVLDNMHHVLLVWMGPVLPLLVLVHPDYIKPLLGASAAIAPKDDLFYGFLKPWLGDGLLLSKGDKWSRHRRLLTPAFHFDILKPYMKIFNQSADIMHAKWRHLAEGSAVSLDMFEHISLMTLDSLQKCVFSYNSNCQEKMSDYISAIIELSALSVRRQYRLHHYLDFIYYRSADGRRFRQACDMVHHFTTEVIQERRRALRQQGAEAWLKAKQGKTLDFIDVLLLARDEDGKELSDEDIRAEADTFMFEGHDTTSSGISWMLFNLAKYPEYQEKCREEIQEVMKGRELEELEWDDLTQLPFTTMCIKESLRQYPPVTLVSRQCTEDIKLPDGRIIPKGIICLVSIYGTHHNPTVWPDSKVYNPYRFDPDNPQQRSPLAYVPFSAGPRNCIGQSFAMAELRVVVALTLLRFRLSVDRTRKVRRKPELILRTENGLWLKVEPLPPRA.

Residues 1-22 (MLPITDRLLHLLGLEKTAFRIY) are Lumenal-facing. A helical membrane pass occupies residues 23-43 (AVSTLLLFLLFFLFRLLLRFL). Over 44-531 (RLCRSFYITC…LKVEPLPPRA (488 aa)) the chain is Cytoplasmic. Residues glutamate 335 and cysteine 475 each coordinate heme.

This sequence belongs to the cytochrome P450 family. The cofactor is heme.

The protein localises to the endoplasmic reticulum membrane. It localises to the microsome membrane. It carries out the reaction triacontanoate + reduced [NADPH--hemoprotein reductase] + O2 = omega-hydroxy-triacontanoate + oxidized [NADPH--hemoprotein reductase] + H2O + H(+). The enzyme catalyses an omega-methyl-ultra-long-chain fatty acid + reduced [NADPH--hemoprotein reductase] + O2 = an omega-hydroxy-ultra-long-chain fatty acid + oxidized [NADPH--hemoprotein reductase] + H2O + H(+). A cytochrome P450 monooxygenase involved in epidermal ceramide biosynthesis. Hydroxylates the terminal carbon (omega-hydroxylation) of ultra-long-chain fatty acyls (C28-C36) prior to ceramide synthesis. Contributes to the synthesis of three classes of omega-hydroxy-ultra-long chain fatty acylceramides having sphingosine, 6-hydroxysphingosine and phytosphingosine bases, all major lipid components that underlie the permeability barrier of the stratum corneum. Mechanistically, uses molecular oxygen inserting one oxygen atom into a substrate, and reducing the second into a water molecule, with two electrons provided by NADPH via cytochrome P450 reductase (CPR; NADPH-ferrihemoprotein reductase). The sequence is that of Ultra-long-chain fatty acid omega-hydroxylase from Homo sapiens (Human).